The following is a 643-amino-acid chain: Extracellular metalloproteinase 4 (643 aa).

Positions 1 to 18 (MHGLLLAGLLALPLNVLA) are cleaved as a signal peptide. A propeptide spanning residues 19 to 254 (HPTESHSSGI…VHSVVDYVSA (236 aa)) is cleaved from the precursor. Over residues 47–57 (TKSDAVPKQDD) the composition is skewed to basic and acidic residues. Residues 47–71 (TKSDAVPKQDDESFTTSSTGDDNVS) are disordered. The span at 60 to 71 (FTTSSTGDDNVS) shows a compositional bias: polar residues. Asn271 and Asn420 each carry an N-linked (GlcNAc...) asparagine glycan. His437 contacts Zn(2+). Residue Glu438 is part of the active site. Residue His441 coordinates Zn(2+). N-linked (GlcNAc...) asparagine glycosylation is found at Asn510 and Asn553.

It belongs to the peptidase M36 family. It depends on Zn(2+) as a cofactor.

It localises to the secreted. Its function is as follows. Secreted metalloproteinase probably acting as a virulence factor. This Arthroderma benhamiae (Trichophyton mentagrophytes) protein is Extracellular metalloproteinase 4 (MEP4).